The following is a 92-amino-acid chain: Small ribosomal subunit protein uS19 (92 aa).

This sequence belongs to the universal ribosomal protein uS19 family.

Its function is as follows. Protein S19 forms a complex with S13 that binds strongly to the 16S ribosomal RNA. The chain is Small ribosomal subunit protein uS19 from Acidiphilium cryptum (strain JF-5).